The chain runs to 213 residues: Imidazoleglycerol-phosphate dehydratase (213 aa).

Belongs to the imidazoleglycerol-phosphate dehydratase family.

It localises to the cytoplasm. It carries out the reaction D-erythro-1-(imidazol-4-yl)glycerol 3-phosphate = 3-(imidazol-4-yl)-2-oxopropyl phosphate + H2O. Its pathway is amino-acid biosynthesis; L-histidine biosynthesis; L-histidine from 5-phospho-alpha-D-ribose 1-diphosphate: step 6/9. The protein is Imidazoleglycerol-phosphate dehydratase of Trichodesmium erythraeum (strain IMS101).